Consider the following 101-residue polypeptide: Small ribosomal subunit protein uS14 (101 aa).

Belongs to the universal ribosomal protein uS14 family. Part of the 30S ribosomal subunit. Contacts proteins S3 and S10.

Its function is as follows. Binds 16S rRNA, required for the assembly of 30S particles and may also be responsible for determining the conformation of the 16S rRNA at the A site. In Shewanella woodyi (strain ATCC 51908 / MS32), this protein is Small ribosomal subunit protein uS14.